Consider the following 942-residue polypeptide: Isoleucine--tRNA ligase (942 aa).

The 'HIGH' region signature appears at 58–68 (PYANGDIHLGH). Residue E567 participates in L-isoleucyl-5'-AMP binding. Residues 608–612 (KMSKS) carry the 'KMSKS' region motif. K611 contacts ATP. Residues C905, C908, C925, and C928 each contribute to the Zn(2+) site.

This sequence belongs to the class-I aminoacyl-tRNA synthetase family. IleS type 1 subfamily. As to quaternary structure, monomer. The cofactor is Zn(2+).

Its subcellular location is the cytoplasm. The catalysed reaction is tRNA(Ile) + L-isoleucine + ATP = L-isoleucyl-tRNA(Ile) + AMP + diphosphate. Functionally, catalyzes the attachment of isoleucine to tRNA(Ile). As IleRS can inadvertently accommodate and process structurally similar amino acids such as valine, to avoid such errors it has two additional distinct tRNA(Ile)-dependent editing activities. One activity is designated as 'pretransfer' editing and involves the hydrolysis of activated Val-AMP. The other activity is designated 'posttransfer' editing and involves deacylation of mischarged Val-tRNA(Ile). This Pseudoalteromonas translucida (strain TAC 125) protein is Isoleucine--tRNA ligase.